We begin with the raw amino-acid sequence, 493 residues long: Cobyric acid synthase (493 aa).

Residues 246–440 (PIDIAVIKMP…IHGVFDGVVF (195 aa)) form the GATase cobBQ-type domain. C326 acts as the Nucleophile in catalysis. Residue H432 is part of the active site.

This sequence belongs to the CobB/CobQ family. CobQ subfamily.

Its pathway is cofactor biosynthesis; adenosylcobalamin biosynthesis. Functionally, catalyzes amidations at positions B, D, E, and G on adenosylcobyrinic A,C-diamide. NH(2) groups are provided by glutamine, and one molecule of ATP is hydrogenolyzed for each amidation. The sequence is that of Cobyric acid synthase from Clostridium botulinum (strain Kyoto / Type A2).